We begin with the raw amino-acid sequence, 455 residues long: MDPNESPPNQFRHVVAMPYPGRGHINPMMNLCKRLVRRYPNLHVTFVVTEEWLGFIGPDPKPDRIHFSTLPNLIPSELVRAKDFIGFIDAVYTRLEEPFEKLLDSLNSPPPSVIFADTYVIWAVRVGRKRNIPVVSLWTMSATILSFFLHSDLLISHGHALFEPSEEEVVDYVPGLSPTKLRDLPPIFDGYSDRVFKTAKLCFDELPGARSLLFTTAYELEHKAIDAFTSKLDIPVYAIGPLIPFEELSVQNDNKEPNYIQWLEEQPEGSVLYISQGSFLSVSEAQMEEIVKGLRESGVRFLWVARGGELKLKEALEGSLGVVVSWCDQLRVLCHKAVGGFWTHCGFNSTLEGIYSGVPMLAFPLFWDQILNAKMIVEDWRVGMRIERTKKNELLIGREEIKEVVKRFMDRESEEGKEMRRRACDLSEISRGAVAKSGSSNVNIDEFVRHITNTN.

Met1 is subject to N-acetylmethionine. UDP-alpha-D-glucose is bound by residues Ser278, 327-329 (CDQ), 344-352 (HCGFNSTLE), and 366-369 (FWDQ).

It belongs to the UDP-glycosyltransferase family.

The polypeptide is UDP-glycosyltransferase 87A2 (UGT87A2) (Arabidopsis thaliana (Mouse-ear cress)).